The chain runs to 117 residues: Large ribosomal subunit protein uL18 (117 aa).

Over residues 1–17 (MNLSRNKARKVKQKRLR) the composition is skewed to basic residues. The segment at 1–23 (MNLSRNKARKVKQKRLRAKSELS) is disordered.

This sequence belongs to the universal ribosomal protein uL18 family. In terms of assembly, part of the 50S ribosomal subunit; part of the 5S rRNA/L5/L18/L25 subcomplex. Contacts the 5S and 23S rRNAs.

In terms of biological role, this is one of the proteins that bind and probably mediate the attachment of the 5S RNA into the large ribosomal subunit, where it forms part of the central protuberance. In Mycoplasmopsis synoviae (strain 53) (Mycoplasma synoviae), this protein is Large ribosomal subunit protein uL18.